We begin with the raw amino-acid sequence, 345 residues long: Sesquiterpene synthase GALMADRAFT_104215 (345 aa).

Positions 91, 226, 230, and 234 each coordinate Mg(2+). Positions 91–95 match the DDXXD motif motif; the sequence is DEFTD. The (2E,6E)-farnesyl diphosphate site is built by Arg-316 and Tyr-317.

It belongs to the terpene synthase family. It depends on Mg(2+) as a cofactor.

The enzyme catalyses (2E,6E)-farnesyl diphosphate = beta-gurjunene + diphosphate. Terpene cyclase that catalyzes the cyclization of farnesyl diphosphate (FPP) to beta-gurjunene. This is Sesquiterpene synthase GALMADRAFT_104215 from Galerina marginata (strain CBS 339.88).